A 181-amino-acid polypeptide reads, in one-letter code: Shikimate kinase (181 aa).

23-28 serves as a coordination point for ATP; sequence GTGKST. Mg(2+) is bound at residue S27. Substrate is bound by residues D45, R69, and G91. Position 129 (R129) interacts with ATP. R148 serves as a coordination point for substrate.

The protein belongs to the shikimate kinase family. As to quaternary structure, monomer. It depends on Mg(2+) as a cofactor.

The protein localises to the cytoplasm. The enzyme catalyses shikimate + ATP = 3-phosphoshikimate + ADP + H(+). The protein operates within metabolic intermediate biosynthesis; chorismate biosynthesis; chorismate from D-erythrose 4-phosphate and phosphoenolpyruvate: step 5/7. Its function is as follows. Catalyzes the specific phosphorylation of the 3-hydroxyl group of shikimic acid using ATP as a cosubstrate. The sequence is that of Shikimate kinase from Geobacter sulfurreducens (strain ATCC 51573 / DSM 12127 / PCA).